A 95-amino-acid polypeptide reads, in one-letter code: Aspartyl/glutamyl-tRNA(Asn/Gln) amidotransferase subunit C (95 aa).

Belongs to the GatC family. Heterotrimer of A, B and C subunits.

The catalysed reaction is L-glutamyl-tRNA(Gln) + L-glutamine + ATP + H2O = L-glutaminyl-tRNA(Gln) + L-glutamate + ADP + phosphate + H(+). It catalyses the reaction L-aspartyl-tRNA(Asn) + L-glutamine + ATP + H2O = L-asparaginyl-tRNA(Asn) + L-glutamate + ADP + phosphate + 2 H(+). Its function is as follows. Allows the formation of correctly charged Asn-tRNA(Asn) or Gln-tRNA(Gln) through the transamidation of misacylated Asp-tRNA(Asn) or Glu-tRNA(Gln) in organisms which lack either or both of asparaginyl-tRNA or glutaminyl-tRNA synthetases. The reaction takes place in the presence of glutamine and ATP through an activated phospho-Asp-tRNA(Asn) or phospho-Glu-tRNA(Gln). This chain is Aspartyl/glutamyl-tRNA(Asn/Gln) amidotransferase subunit C, found in Hyphomonas neptunium (strain ATCC 15444).